Consider the following 368-residue polypeptide: Probable dual-specificity RNA methyltransferase RlmN (368 aa).

Catalysis depends on E109, which acts as the Proton acceptor. The 241-residue stretch at 115–355 (YPDRVTMCIS…VTIRDTRGQE (241 aa)) folds into the Radical SAM core domain. The cysteines at positions 122 and 360 are disulfide-linked. Positions 129, 133, and 136 each coordinate [4Fe-4S] cluster. S-adenosyl-L-methionine contacts are provided by residues 184–185 (GE), S218, 241–243 (SLH), and N317. C360 acts as the S-methylcysteine intermediate in catalysis.

The protein belongs to the radical SAM superfamily. RlmN family. [4Fe-4S] cluster serves as cofactor.

The protein localises to the cytoplasm. It catalyses the reaction adenosine(2503) in 23S rRNA + 2 reduced [2Fe-2S]-[ferredoxin] + 2 S-adenosyl-L-methionine = 2-methyladenosine(2503) in 23S rRNA + 5'-deoxyadenosine + L-methionine + 2 oxidized [2Fe-2S]-[ferredoxin] + S-adenosyl-L-homocysteine. It carries out the reaction adenosine(37) in tRNA + 2 reduced [2Fe-2S]-[ferredoxin] + 2 S-adenosyl-L-methionine = 2-methyladenosine(37) in tRNA + 5'-deoxyadenosine + L-methionine + 2 oxidized [2Fe-2S]-[ferredoxin] + S-adenosyl-L-homocysteine. Its function is as follows. Specifically methylates position 2 of adenine 2503 in 23S rRNA and position 2 of adenine 37 in tRNAs. The sequence is that of Probable dual-specificity RNA methyltransferase RlmN from Streptomyces coelicolor (strain ATCC BAA-471 / A3(2) / M145).